The sequence spans 230 residues: 7-cyano-7-deazaguanine synthase (230 aa).

14–24 (LSGGLDSTTTL) is a binding site for ATP. Cys-194, Cys-204, Cys-207, and Cys-210 together coordinate Zn(2+).

This sequence belongs to the QueC family. Requires Zn(2+) as cofactor.

It catalyses the reaction 7-carboxy-7-deazaguanine + NH4(+) + ATP = 7-cyano-7-deazaguanine + ADP + phosphate + H2O + H(+). It participates in purine metabolism; 7-cyano-7-deazaguanine biosynthesis. Functionally, catalyzes the ATP-dependent conversion of 7-carboxy-7-deazaguanine (CDG) to 7-cyano-7-deazaguanine (preQ(0)). This Vesicomyosocius okutanii subsp. Calyptogena okutanii (strain HA) protein is 7-cyano-7-deazaguanine synthase.